A 205-amino-acid polypeptide reads, in one-letter code: Glycerol-3-phosphate acyltransferase 1 (205 aa).

Helical transmembrane passes span 7 to 27 (TLIG…KLFL), 52 to 74 (WGIL…VYFV), 78 to 100 (HINI…WNHF), 125 to 145 (LLIA…PLVF), and 160 to 180 (AGIV…QDII).

It belongs to the PlsY family. As to quaternary structure, probably interacts with PlsX.

Its subcellular location is the cell membrane. The catalysed reaction is an acyl phosphate + sn-glycerol 3-phosphate = a 1-acyl-sn-glycero-3-phosphate + phosphate. The protein operates within lipid metabolism; phospholipid metabolism. Catalyzes the transfer of an acyl group from acyl-phosphate (acyl-PO(4)) to glycerol-3-phosphate (G3P) to form lysophosphatidic acid (LPA). This enzyme utilizes acyl-phosphate as fatty acyl donor, but not acyl-CoA or acyl-ACP. The polypeptide is Glycerol-3-phosphate acyltransferase 1 (Lactobacillus acidophilus (strain ATCC 700396 / NCK56 / N2 / NCFM)).